We begin with the raw amino-acid sequence, 89 residues long: Small ribosomal subunit protein bS20 (89 aa).

This sequence belongs to the bacterial ribosomal protein bS20 family.

Binds directly to 16S ribosomal RNA. In Wolbachia pipientis wMel, this protein is Small ribosomal subunit protein bS20.